We begin with the raw amino-acid sequence, 619 residues long: Calnexin (619 aa).

A signal peptide spans 1-21; the sequence is MVNRKWMYIFIQFLLVSSIRS. Aspartate 109 serves as a coordination point for Ca(2+). A disulfide bond links cysteine 152 and cysteine 186. 4 residues coordinate an alpha-D-glucoside: tyrosine 156, lysine 158, tyrosine 177, and aspartate 184. Asparagine 203 is a glycosylation site (N-linked (GlcNAc...) asparagine). Residues 268-401 are p domain (Extended arm); the sequence is IFDETDLKPV…RLIDNPNYFE (134 aa). 5 tandem repeats follow at residues 270–282, 287–299, 306–318, 325–337, and 340–350. 4 X approximate repeats stretches follow at residues 270-337 and 340-397; these read DETD…WDED and GSWE…IDNP. Cysteine 352 and cysteine 358 are joined by a disulfide. 3 repeat units span residues 359–369, 373–383, and 387–397. Glutamate 417 is a binding site for an alpha-D-glucoside. Aspartate 428 provides a ligand contact to Ca(2+). The chain crosses the membrane as a helical span at residues 481-501; the sequence is LWAVYILCVLLPLVAIGVFCF. The tract at residues 538–619 is disordered; it reads GDEEDDVNQP…AKRRTARRGD (82 aa). Residues 547–557 show a composition bias toward polar residues; sequence PGPSGSQSNPE. Over residues 566-577 the composition is skewed to low complexity; it reads EQQSANSSQSSA. Asparagine 571 is a glycosylation site (N-linked (GlcNAc...) asparagine). Positions 585–601 are enriched in basic and acidic residues; it reads HVVPENEPVKPTEEFAK. Residues 610–619 are compositionally biased toward basic residues; that stretch reads AKRRTARRGD.

It belongs to the calreticulin family. Post-translationally, glycosylation is important for its biological activity. In terms of tissue distribution, expressed ubiquitously in every blastomere of the embryo up to the gastrulation stage. Expression becomes gradually restricted to the head and tail regions at the comma stage during embryogenesis. During postembryonic development, expressed prominently in the H-shaped excretory cell, in the neurons of head (including ASK and ADL) and tail (including PHA and PHB), in the dorsal and ventral nerve cords, and in the spermatheca. Expressed in the spicules of the male tail (at protein level).

It is found in the endoplasmic reticulum membrane. The protein localises to the cytoplasm. The protein resides in the perinuclear region. Its subcellular location is the cytoplasmic vesicle. Its function is as follows. Calcium-binding protein that interacts with newly synthesized monoglucosylated glycoproteins in the endoplasmic reticulum. It may act in assisting protein assembly and/or in the retention within the ER of unassembled protein subunits. It seems to play a major role in the quality control apparatus of the ER by the retention of incorrectly folded proteins. Required for embryogenesis and larval development under heat and ER stress conditions. May be important for germ cell development. Involved in neuronal necrotic cell death. This is Calnexin (cnx-1) from Caenorhabditis elegans.